The following is an 803-amino-acid chain: MKLTLSWLKDHLDTDEPLEKLADKLTMIGLEVEGIEDKAKVLAPFTIAKVLTAAKHPNADKLQVCTVDVGDGAAPVQVVCGAPNARAGLVTVFAPPGTYIPAKDFTLGIGNIRGVESRGMLCSAAELQISEDHDGIIELPADAPVGAAYAAWAGLGDPVLDINLTPNRQDCAGVHGIARDLAAADMGKFKDPGIKPIKGEFPCPVSVTVEDSTLCPGFALRLVKGVKNGPSPEWLQKRLTAIGLRPINALVDITNYLTFDRSRPLHVFDAAKVKGNLVVRRAKDGETLLALDGRTYTLDSSVCVIADDHGVESLAGIMGGELSGCSAETTDVLIESALWNEINIAQSGRKLGINTDARYRFERGVDPAFMLPGLELATKLVMEFCGGTPSDVVVVGNPFADDKIIDFPLAEVKRLAGIEVSLTEIRRILNHLGFTVVGQAPVVKVAVPSWRSDVHGKADIVEEIVRIVGVDKVPLTPFERGDAPRKPVLTQIQNRTRRAKRALAARGLTEAVTWSFISKPFAEAFGGGQPELALANPIASDLSDMRPSLLPGLIAAAQANADRGSPDLALFEVGQVFKGDRPQDQFMAASGVRRGVASSAGLGRHWSGSAQATALDAKADAFAVLAAAGAPMAGLQIATNKLPAWLHPGRSGAIQIGPQNVLGYFGELHPRVLEQLGADGPLVAFEVILEKIPDPKQRPTRAKPALELSAFHPVSRDFAFIVDRKVAVADIVRAAQGVDKKLITSVSVFDVYEGKGIDPDKKSVAIAVTLQPRDKTMTDQEIEAVAAKIVAEVTKKTGGSLRG.

Positions 39-150 (AKVLAPFTIA…ADAPVGAAYA (112 aa)) constitute a tRNA-binding domain. In terms of domain architecture, B5 spans 400–475 (ADDKIIDFPL…RIVGVDKVPL (76 aa)). The Mg(2+) site is built by Asp-453, Asp-459, Glu-462, and Glu-463. Residues 709-802 (SAFHPVSRDF…VTKKTGGSLR (94 aa)) form the FDX-ACB domain.

The protein belongs to the phenylalanyl-tRNA synthetase beta subunit family. Type 1 subfamily. In terms of assembly, tetramer of two alpha and two beta subunits. It depends on Mg(2+) as a cofactor.

It localises to the cytoplasm. It carries out the reaction tRNA(Phe) + L-phenylalanine + ATP = L-phenylalanyl-tRNA(Phe) + AMP + diphosphate + H(+). This chain is Phenylalanine--tRNA ligase beta subunit, found in Rhodopseudomonas palustris (strain ATCC BAA-98 / CGA009).